The sequence spans 444 residues: MRNVRLFRALLGVDKRTVIEDIEFEEDDAGDGARVIARVRPRSAVLRRCGRCGRKASWYDRGAGLRQWRSLDWGTVEVFLEAEAPRVNCPTHGPTVVAVPWARHHAGHTYAFDDTVAWLAVACSKTAVCELMRIAWRTVGAIVARVWADTEKRIDRFANLRRIGIDEISYKRHHRYLTVVVDHDSGRLVWAAPGHDKATLGLFFDALGAERAAQITHVSADAADWIADVVTERCPDAIQCADPFHVVAWATEALDVERRRAWNDARAIARTEPKWGRGRPGKNAAPRPGRERARRLKGARYALWKNPEDLTERQSAKLAWIAKTDPRLYRAYLLKESLRHVFSVKGEEGKQALDRWISWAQRCRIPVFVELAARIKRHRVAIDAALDHGLSQGLIESTNTKIRLLTRIAFGFRSPQALIALAMLTLAGHRPTLPGRHNHPQISQ.

Positions 273–292 (PKWGRGRPGKNAAPRPGRER) are disordered.

Belongs to the transposase 12 family.

This chain is Transposase for insertion sequence element IS1557, found in Mycobacterium tuberculosis (strain CDC 1551 / Oshkosh).